The sequence spans 312 residues: Cytochrome c biogenesis protein CcsA (312 aa).

The next 8 membrane-spanning stretches (helical) occupy residues 12-32, 47-67, 72-92, 98-118, 144-164, 220-240, 254-271, and 281-301; these read NLVF…LSFF, IVAN…AGYF, LYES…YVEF, LVGA…NLTL, MMLS…FLVI, IIGL…VWAN, TWAL…HSRI, and AILG…VNFL.

The protein belongs to the CcmF/CycK/Ccl1/NrfE/CcsA family. In terms of assembly, may interact with Ccs1.

It is found in the plastid. Its subcellular location is the chloroplast thylakoid membrane. Required during biogenesis of c-type cytochromes (cytochrome c6 and cytochrome f) at the step of heme attachment. The polypeptide is Cytochrome c biogenesis protein CcsA (Trieres chinensis (Marine centric diatom)).